The chain runs to 273 residues: Urease accessory protein UreD (273 aa).

The segment at 1-29 (MLMRTATPLDQPRAIGSARVSSKRVNGGS) is disordered.

It belongs to the UreD family. As to quaternary structure, ureD, UreF and UreG form a complex that acts as a GTP-hydrolysis-dependent molecular chaperone, activating the urease apoprotein by helping to assemble the nickel containing metallocenter of UreC. The UreE protein probably delivers the nickel.

Its subcellular location is the cytoplasm. Its function is as follows. Required for maturation of urease via the functional incorporation of the urease nickel metallocenter. In Roseobacter denitrificans (strain ATCC 33942 / OCh 114) (Erythrobacter sp. (strain OCh 114)), this protein is Urease accessory protein UreD.